Reading from the N-terminus, the 142-residue chain is Large ribosomal subunit protein uL11 (142 aa).

The protein belongs to the universal ribosomal protein uL11 family. In terms of assembly, part of the ribosomal stalk of the 50S ribosomal subunit. Interacts with L10 and the large rRNA to form the base of the stalk. L10 forms an elongated spine to which L12 dimers bind in a sequential fashion forming a multimeric L10(L12)X complex. Post-translationally, one or more lysine residues are methylated.

In terms of biological role, forms part of the ribosomal stalk which helps the ribosome interact with GTP-bound translation factors. In Rhodopseudomonas palustris (strain BisB5), this protein is Large ribosomal subunit protein uL11.